The chain runs to 47 residues: Protein YqhI (47 aa).

This is Protein YqhI from Escherichia coli (strain K12).